A 23-amino-acid chain; its full sequence is Magainin-BM2 (23 aa).

In terms of tissue distribution, expressed by the skin glands.

Its subcellular location is the secreted. Functionally, antimicrobial peptide. The sequence is that of Magainin-BM2 from Xenopus boumbaensis (Mawa clawed frog).